A 516-amino-acid polypeptide reads, in one-letter code: MSITSPPIEVSVLTDSIKNLLEKNFLRVVVKGELSNVSLQTSGHLYFAIKDSKAVLNGAFFHFRSKYFDRKPKDGDYVILHGKLTVYAPRGQYQIVAYALTFSGEGNLLQQFEERKQRLAAEGYFDPKRKKPLPSGARVIGVITSPTGAVIQDILRVLSRRCHQFQVILYPVTVQGATAAQEISQAIQFFNQNSMRVHALIIARGGGSIEDLWAFNEEELVKSIVASSIPIISAVGHETDFTLCDFASDVRAPTPSAAAEIVCKSSDQYRQELQNLRRYVSSHARQFIAAKKNLLTHWQRHLASVDFYHTAQQTLDYTRAALERGIETKLEYYKQRFAQYRRWLKSDVLIRIEKHLADLNQSLMLSIKNKIYTKKTSLNQLYTSCLKNELLNLQHRTQHSRNILSQLSRRLHIAIASSQQTHQECLVRLQNELSFTIQHLLTKAKERCQAIQEQASSLNPKNVLKRGFAQLFDFNKHFVIISAESLKQSDLVRVCLQDGEAVVSVKEVWLNNDKKG.

The protein belongs to the XseA family. Heterooligomer composed of large and small subunits.

It localises to the cytoplasm. It catalyses the reaction Exonucleolytic cleavage in either 5'- to 3'- or 3'- to 5'-direction to yield nucleoside 5'-phosphates.. Functionally, bidirectionally degrades single-stranded DNA into large acid-insoluble oligonucleotides, which are then degraded further into small acid-soluble oligonucleotides. This chain is Exodeoxyribonuclease 7 large subunit, found in Chlamydia trachomatis serovar L2 (strain ATCC VR-902B / DSM 19102 / 434/Bu).